A 192-amino-acid polypeptide reads, in one-letter code: uncharacterized protein (192 aa).

The protein to A.aeolicus AQ_054.

This is an uncharacterized protein from Thermotoga maritima (strain ATCC 43589 / DSM 3109 / JCM 10099 / NBRC 100826 / MSB8).